A 163-amino-acid chain; its full sequence is Probable cyclic pyranopterin monophosphate synthase (163 aa).

Residues 1–23 form a disordered region; sequence MPDGDDDALTHTTADGDAQMVDV. Substrate-binding positions include 80-82 and 116-117; these read MCH and ME. Residue Asp131 is part of the active site.

It belongs to the MoaC family. In terms of assembly, homohexamer; trimer of dimers.

The enzyme catalyses (8S)-3',8-cyclo-7,8-dihydroguanosine 5'-triphosphate = cyclic pyranopterin phosphate + diphosphate. The protein operates within cofactor biosynthesis; molybdopterin biosynthesis. Its function is as follows. Catalyzes the conversion of (8S)-3',8-cyclo-7,8-dihydroguanosine 5'-triphosphate to cyclic pyranopterin monophosphate (cPMP). This is Probable cyclic pyranopterin monophosphate synthase from Halobacterium salinarum (strain ATCC 29341 / DSM 671 / R1).